The primary structure comprises 277 residues: Phosphatidylglycerol--prolipoprotein diacylglyceryl transferase (277 aa).

The next 4 membrane-spanning stretches (helical) occupy residues 18–38, 51–71, 89–109, and 116–136; these read ISVK…LLLA, IIVD…RIYY, IWHG…TAII, and ISFW…QAIG. Arginine 137 is an a 1,2-diacyl-sn-glycero-3-phospho-(1'-sn-glycerol) binding site. Transmembrane regions (helical) follow at residues 177–197, 205–225, and 235–255; these read QPTF…LLII, GELF…IEGM, and FRVS…IIIY.

Belongs to the Lgt family.

Its subcellular location is the cell membrane. It carries out the reaction L-cysteinyl-[prolipoprotein] + a 1,2-diacyl-sn-glycero-3-phospho-(1'-sn-glycerol) = an S-1,2-diacyl-sn-glyceryl-L-cysteinyl-[prolipoprotein] + sn-glycerol 1-phosphate + H(+). It participates in protein modification; lipoprotein biosynthesis (diacylglyceryl transfer). Its function is as follows. Catalyzes the transfer of the diacylglyceryl group from phosphatidylglycerol to the sulfhydryl group of the N-terminal cysteine of a prolipoprotein, the first step in the formation of mature lipoproteins. This chain is Phosphatidylglycerol--prolipoprotein diacylglyceryl transferase, found in Listeria monocytogenes serotype 4b (strain CLIP80459).